We begin with the raw amino-acid sequence, 61 residues long: Large ribosomal subunit protein bL32 (61 aa).

A compositionally biased stretch (basic residues) spans 1–18 (MAIVPKRKTSKQRKRKRQ). Residues 1 to 20 (MAIVPKRKTSKQRKRKRQTH) form a disordered region.

This sequence belongs to the bacterial ribosomal protein bL32 family.

The polypeptide is Large ribosomal subunit protein bL32 (rpmF) (Mycoplasmopsis pulmonis (strain UAB CTIP) (Mycoplasma pulmonis)).